A 338-amino-acid polypeptide reads, in one-letter code: Ferredoxin--NADP reductase (338 aa).

Positions 32, 40, 45, 85, 120, 287, and 327 each coordinate FAD.

This sequence belongs to the ferredoxin--NADP reductase type 2 family. As to quaternary structure, homodimer. It depends on FAD as a cofactor.

The enzyme catalyses 2 reduced [2Fe-2S]-[ferredoxin] + NADP(+) + H(+) = 2 oxidized [2Fe-2S]-[ferredoxin] + NADPH. The polypeptide is Ferredoxin--NADP reductase (Wolbachia pipientis wMel).